A 103-amino-acid polypeptide reads, in one-letter code: Small ribosomal subunit protein uS10 (103 aa).

Belongs to the universal ribosomal protein uS10 family. As to quaternary structure, part of the 30S ribosomal subunit.

Involved in the binding of tRNA to the ribosomes. This chain is Small ribosomal subunit protein uS10, found in Chromobacterium violaceum (strain ATCC 12472 / DSM 30191 / JCM 1249 / CCUG 213 / NBRC 12614 / NCIMB 9131 / NCTC 9757 / MK).